A 259-amino-acid chain; its full sequence is Imidazole glycerol phosphate synthase subunit HisF (259 aa).

Active-site residues include Asp11 and Asp130.

It belongs to the HisA/HisF family. As to quaternary structure, heterodimer of HisH and HisF.

The protein resides in the cytoplasm. It catalyses the reaction 5-[(5-phospho-1-deoxy-D-ribulos-1-ylimino)methylamino]-1-(5-phospho-beta-D-ribosyl)imidazole-4-carboxamide + L-glutamine = D-erythro-1-(imidazol-4-yl)glycerol 3-phosphate + 5-amino-1-(5-phospho-beta-D-ribosyl)imidazole-4-carboxamide + L-glutamate + H(+). It functions in the pathway amino-acid biosynthesis; L-histidine biosynthesis; L-histidine from 5-phospho-alpha-D-ribose 1-diphosphate: step 5/9. In terms of biological role, IGPS catalyzes the conversion of PRFAR and glutamine to IGP, AICAR and glutamate. The HisF subunit catalyzes the cyclization activity that produces IGP and AICAR from PRFAR using the ammonia provided by the HisH subunit. The chain is Imidazole glycerol phosphate synthase subunit HisF from Polaromonas naphthalenivorans (strain CJ2).